Consider the following 740-residue polypeptide: NAD(P)H-quinone oxidoreductase subunit 5, chloroplastic (740 aa).

16 helical membrane-spanning segments follow: residues 9 to 29 (WIIPFIPLPVPMLIGAGLILF), 40 to 60 (WAFQSVLLLSIVMVFSIYLSI), 89 to 109 (IDPLTSIMSILITTVGIMVLI), 125 to 145 (FAYMSFFSTSMLGLVTSSNLI), 147 to 167 (IYIFWELVGLCSYLLIGFWFT), 185 to 205 (GDFGLLLGILGFYWITGSFEF), 219 to 239 (NEVDFLFVTLCAVLLFAGAVA), 258 to 278 (TPISALIHAATMVAAGIFLVA), 286 to 306 (VIPYIMYLISVIGIITVLLGA), 327 to 347 (LGYMMLALGMGSYRSALFHLI), 354 to 374 (ALLFLGSGSIIHSMETIVGYS), 396 to 416 (ITFLLGTLSLCGIPPLACFWS), 425 to 445 (WLYSPIFAIIAWATAGLTAFY), 543 to 563 (LFPIFVLGLFTLFVGSLGIPF), 602 to 622 (VLSVSIAYFGIFIASFLYKPI), and 717 to 737 (SYLFLYLAYVLVFLLVYYLLF).

Belongs to the complex I subunit 5 family. NDH is composed of at least 16 different subunits, 5 of which are encoded in the nucleus.

Its subcellular location is the plastid. The protein localises to the chloroplast thylakoid membrane. The catalysed reaction is a plastoquinone + NADH + (n+1) H(+)(in) = a plastoquinol + NAD(+) + n H(+)(out). It catalyses the reaction a plastoquinone + NADPH + (n+1) H(+)(in) = a plastoquinol + NADP(+) + n H(+)(out). Functionally, NDH shuttles electrons from NAD(P)H:plastoquinone, via FMN and iron-sulfur (Fe-S) centers, to quinones in the photosynthetic chain and possibly in a chloroplast respiratory chain. The immediate electron acceptor for the enzyme in this species is believed to be plastoquinone. Couples the redox reaction to proton translocation, and thus conserves the redox energy in a proton gradient. This chain is NAD(P)H-quinone oxidoreductase subunit 5, chloroplastic (ndhF), found in Nicotiana tomentosiformis (Tobacco).